The following is a 287-amino-acid chain: MSKTTFDAQSITNSLRAAKHQPRKRFGQNFLHDRSVIREIVESIRLERDDNLIEIGPGMGALTEPLLAEVDAMTVVELDRDLADSLRIRIGANSHPNFEIIKNNAMHVDYRELYSDERGKLRVVGNLPYNISTPILFHLLSYADVIEDMHFMLQKEVVERITADVGSKTYGRLSVIMQYHCHTDYLLTVPRGAFNPPPKVTSAVFRLTPHIIKPVVAEDEEYFALVVRETFNHRRKTLRAIFKKSTLLPTLSEDDFAACAIDPQARPETLSVKDFVNLSNQARKVEG.

Residues 1–15 (MSKTTFDAQSITNSL) show a composition bias toward polar residues. Positions 1-20 (MSKTTFDAQSITNSLRAAKH) are disordered. Residues Asn-29, Leu-31, Gly-56, Glu-77, and Asn-126 each coordinate S-adenosyl-L-methionine.

Belongs to the class I-like SAM-binding methyltransferase superfamily. rRNA adenine N(6)-methyltransferase family. RsmA subfamily.

Its subcellular location is the cytoplasm. It catalyses the reaction adenosine(1518)/adenosine(1519) in 16S rRNA + 4 S-adenosyl-L-methionine = N(6)-dimethyladenosine(1518)/N(6)-dimethyladenosine(1519) in 16S rRNA + 4 S-adenosyl-L-homocysteine + 4 H(+). In terms of biological role, specifically dimethylates two adjacent adenosines (A1518 and A1519) in the loop of a conserved hairpin near the 3'-end of 16S rRNA in the 30S particle. May play a critical role in biogenesis of 30S subunits. The protein is Ribosomal RNA small subunit methyltransferase A of Psychrobacter cryohalolentis (strain ATCC BAA-1226 / DSM 17306 / VKM B-2378 / K5).